The following is a 322-amino-acid chain: Phosphatidylserine decarboxylase proenzyme (322 aa).

Residues Asp-90, His-147, and Ser-254 each act as charge relay system; for autoendoproteolytic cleavage activity in the active site. The active-site Schiff-base intermediate with substrate; via pyruvic acid; for decarboxylase activity is Ser-254. Position 254 is a pyruvic acid (Ser); by autocatalysis (Ser-254). The interval 293–322 (PDAEPAPLPAEEIEAEHDASPLIDDKKDQV) is disordered. Over residues 308–322 (EHDASPLIDDKKDQV) the composition is skewed to basic and acidic residues.

This sequence belongs to the phosphatidylserine decarboxylase family. PSD-B subfamily. Prokaryotic type I sub-subfamily. In terms of assembly, heterodimer of a large membrane-associated beta subunit and a small pyruvoyl-containing alpha subunit. The cofactor is pyruvate. In terms of processing, is synthesized initially as an inactive proenzyme. Formation of the active enzyme involves a self-maturation process in which the active site pyruvoyl group is generated from an internal serine residue via an autocatalytic post-translational modification. Two non-identical subunits are generated from the proenzyme in this reaction, and the pyruvate is formed at the N-terminus of the alpha chain, which is derived from the carboxyl end of the proenzyme. The autoendoproteolytic cleavage occurs by a canonical serine protease mechanism, in which the side chain hydroxyl group of the serine supplies its oxygen atom to form the C-terminus of the beta chain, while the remainder of the serine residue undergoes an oxidative deamination to produce ammonia and the pyruvoyl prosthetic group on the alpha chain. During this reaction, the Ser that is part of the protease active site of the proenzyme becomes the pyruvoyl prosthetic group, which constitutes an essential element of the active site of the mature decarboxylase.

It localises to the cell membrane. It carries out the reaction a 1,2-diacyl-sn-glycero-3-phospho-L-serine + H(+) = a 1,2-diacyl-sn-glycero-3-phosphoethanolamine + CO2. It functions in the pathway phospholipid metabolism; phosphatidylethanolamine biosynthesis; phosphatidylethanolamine from CDP-diacylglycerol: step 2/2. In terms of biological role, catalyzes the formation of phosphatidylethanolamine (PtdEtn) from phosphatidylserine (PtdSer). The sequence is that of Phosphatidylserine decarboxylase proenzyme from Escherichia coli O127:H6 (strain E2348/69 / EPEC).